The following is a 426-amino-acid chain: Serine--tRNA ligase (426 aa).

Residue 229–231 (TAE) participates in L-serine binding. Residues 260-262 (RKE) and Val-276 contribute to the ATP site. Glu-283 is an L-serine binding site. 349 to 352 (EVTS) lines the ATP pocket. Residue Thr-384 coordinates L-serine.

It belongs to the class-II aminoacyl-tRNA synthetase family. Type-1 seryl-tRNA synthetase subfamily. In terms of assembly, homodimer. The tRNA molecule binds across the dimer.

It is found in the cytoplasm. It catalyses the reaction tRNA(Ser) + L-serine + ATP = L-seryl-tRNA(Ser) + AMP + diphosphate + H(+). The catalysed reaction is tRNA(Sec) + L-serine + ATP = L-seryl-tRNA(Sec) + AMP + diphosphate + H(+). The protein operates within aminoacyl-tRNA biosynthesis; selenocysteinyl-tRNA(Sec) biosynthesis; L-seryl-tRNA(Sec) from L-serine and tRNA(Sec): step 1/1. Functionally, catalyzes the attachment of serine to tRNA(Ser). Is also able to aminoacylate tRNA(Sec) with serine, to form the misacylated tRNA L-seryl-tRNA(Sec), which will be further converted into selenocysteinyl-tRNA(Sec). This Treponema pallidum (strain Nichols) protein is Serine--tRNA ligase.